The chain runs to 48 residues: ATP synthase protein 8 (48 aa).

An N-formylmethionine modification is found at M1. Residues 1–12 (MPQLIPFFFLNQ) lie on the Mitochondrial intermembrane side of the membrane. Residues 13-33 (LFYGYLALFALLVLVSWVILP) traverse the membrane as a helical segment. Topologically, residues 34 to 48 (YLLQLQIVRLLITKL) are mitochondrial matrix.

F-type ATP synthases have 2 components, the catalytic core F(1) and the membrane-embedded component F(0), linked together by a central stalk and a peripheral stalk. The central stalk, also called rotor shaft, is often seen as part of F(1). The peripheral stalk is seen as part of F(0). F(0) contains the membrane channel next to the rotor. F-type ATP synthases form dimers but each monomer functions independently in ATP generation. The dimer consists of 18 different polypeptides: ATP1 (subunit alpha, part of F(1), 3 molecules per monomer), ATP2 (subunit beta, part of F(1), 3 molecules per monomer), ATP3 (subunit gamma, part of the central stalk), ATP4 (subunit b, part of the peripheral stalk), ATP5/OSCP (subunit 5/OSCP, part of the peripheral stalk), ATP6 (subunit a, part of the peripheral stalk), ATP7 (subunit d, part of the peripheral stalk), ATP8 (subunit 8, part of the peripheral stalk), OLI1 (subunit c, part of the rotor, 10 molecules per monomer), ATP14 (subunit h, part of the peripheral stalk), ATP15 (subunit epsilon, part of the central stalk), ATP16 (subunit delta, part of the central stalk), ATP17 (subunit f, part of the peripheral stalk), ATP18 (subunit i/j, part of the peripheral stalk). Dimer-specific subunits are ATP19 (subunit k, at interface between monomers), ATP20 (subunit g, at interface between monomers), TIM11 (subunit e, at interface between monomers). Also contains subunit L.

The protein resides in the mitochondrion inner membrane. In terms of biological role, mitochondrial membrane ATP synthase (F(1)F(0) ATP synthase or Complex V) produces ATP from ADP in the presence of a proton gradient across the membrane which is generated by electron transport complexes of the respiratory chain. F-type ATP synthases consist of two structural domains, F(1) - containing the extramembraneous catalytic core, and F(0) - containing the membrane proton channel, linked together by a central stalk and a peripheral stalk. During catalysis, ATP synthesis in the catalytic domain of F(1) is coupled via a rotary mechanism of the central stalk subunits to proton translocation. Part of the complex F(0) domain. Minor subunit located with subunit a/ATP6 in the membrane. The protein is ATP synthase protein 8 of Pichia angusta (Yeast).